The sequence spans 551 residues: TRAF3-interacting JNK-activating modulator (551 aa).

Over 1-526 (MISPDPRPSP…QLPPRRQCGR (526 aa)) the chain is Cytoplasmic. 2 disordered regions span residues 73 to 95 (LEEKGKAQHPQAREQGPSRRPGQ) and 140 to 178 (DHLSSQAGGLPPQDTPIKKPPKHHRGTQTKAEGPTIKND). Coiled coils occupy residues 240–436 (DKLK…LLTK) and 464–506 (WDLR…RKLQ). A helical; Anchor for type IV membrane protein transmembrane segment spans residues 527 to 544 (WLPVLMVVIAAALAVFLA). The Extracellular segment spans residues 545–551 (NKDNLMI).

In terms of assembly, interacts (via its coiled-coil domain) with TRAF3 (via isoleucine zipper). Interacts with MAP2K1. Interacts with PPP2CA; this interaction targets PPP2CA to the lysosomes. Interacts with TLR4. Interacts with MAVS. Interacts with TBK1.

It localises to the cell membrane. It is found in the golgi apparatus membrane. The protein resides in the lysosome membrane. The protein localises to the mitochondrion outer membrane. In terms of biological role, adapter protein that plays essential roles in both innate and adaptive immunity. Plays a crucial role in the regulation of thymocyte development. Mechanistically, mediates TCR-stimulated activation through recruiting MAP2K1/MEK1 to the Golgi and, thereby, facilitating the interaction of MAP2K1/MEK1 with its activator BRAF. Also plays an essential role in regulatory T-cell stability and function by recruiting the serine-threonine phosphatase catalytic subunit (PPP2CA) to the lysosome, thereby facilitating the interaction of PP2Ac with the mTORC1 component RPTOR and restricting glycolytic metabolism. Positively regulates TLR4 signaling activity in macrophage-mediated inflammation by acting as a molecular clamp to facilitate LPS-induced translocation of TLR4 to lipid rafts. In response to viral infection, facilitates the recruitment of TRAF3 to MAVS within mitochondria leading to IRF3 activation and interferon production. However, participates in the maintenance of immune homeostasis and the prevention of overzealous innate immunity by promoting 'Lys-48'-dependent ubiquitination of TBK1. The protein is TRAF3-interacting JNK-activating modulator (TRAF3IP3) of Homo sapiens (Human).